The sequence spans 148 residues: Putative HTH-type transcriptional regulator NMA1593 (148 aa).

The 130-residue stretch at 2–131 (RLTTKGRFAV…GSVTLQSIIE (130 aa)) folds into the HTH rrf2-type domain.

The chain is Putative HTH-type transcriptional regulator NMA1593 from Neisseria meningitidis serogroup A / serotype 4A (strain DSM 15465 / Z2491).